A 109-amino-acid polypeptide reads, in one-letter code: Cytochrome bo(3) ubiquinol oxidase subunit 4 (109 aa).

The Cytoplasmic segment spans residues 1-17 (MSHSTDHSGASHGSVKT). Residues 18–36 (YMTGFILSIILTVIPFWMV) form a helical membrane-spanning segment. Topologically, residues 37-45 (MTGAASPAV) are periplasmic. The helical transmembrane segment at 46–64 (ILGTILAMAVVQVLVHLVC) threads the bilayer. The Cytoplasmic portion of the chain corresponds to 65-80 (FLHMNTKSDEGWNMTA). Residues 81–99 (FVFTVLIIAILVVGSIWIM) form a helical membrane-spanning segment. Residues 100–109 (WNLNYNMMMH) are Periplasmic-facing.

Belongs to the cytochrome c oxidase bacterial subunit 4 family. In terms of assembly, heterooctamer of two A chains, two B chains, two C chains and two D chains.

The protein localises to the cell inner membrane. Cytochrome bo(3) ubiquinol terminal oxidase is the component of the aerobic respiratory chain of E.coli that predominates when cells are grown at high aeration. Has proton pump activity across the membrane in addition to electron transfer, pumping 2 protons/electron. This is Cytochrome bo(3) ubiquinol oxidase subunit 4 (cyoD) from Escherichia coli O157:H7.